Here is a 272-residue protein sequence, read N- to C-terminus: ATP synthase subunit a (272 aa).

A run of 5 helical transmembrane segments spans residues 41-61 (TLNI…LALF), 102-122 (IAPL…MDLV), 147-167 (DVNI…FYSI), 212-232 (LFGN…LLPW), and 243-263 (AIFH…LTIV).

Belongs to the ATPase A chain family. As to quaternary structure, F-type ATPases have 2 components, CF(1) - the catalytic core - and CF(0) - the membrane proton channel. CF(1) has five subunits: alpha(3), beta(3), gamma(1), delta(1), epsilon(1). CF(0) has three main subunits: a(1), b(2) and c(9-12). The alpha and beta chains form an alternating ring which encloses part of the gamma chain. CF(1) is attached to CF(0) by a central stalk formed by the gamma and epsilon chains, while a peripheral stalk is formed by the delta and b chains.

Its subcellular location is the cell inner membrane. Its function is as follows. Key component of the proton channel; it plays a direct role in the translocation of protons across the membrane. The protein is ATP synthase subunit a of Edwardsiella ictaluri (strain 93-146).